The chain runs to 162 residues: COP9 signalosome complex subunit 9 (162 aa).

The 113-residue stretch at 6–118 (ETIKSLEDPY…SVSKSMKFSR (113 aa)) folds into the PCI domain.

As to quaternary structure, component of a COP9 signalosome-like (CSN) complex, composed of at least RRI1/CSN5, CSN9, RRI2/CSN10, PCI8/CSN11, CSN12 and CSI1. In the complex, it probably interacts directly with CSN12 and CSI1. Also interacts with RPN5.

The protein resides in the cytoplasm. The protein localises to the nucleus. Its function is as follows. Component of the COP9 signalosome (CSN) complex that acts as a regulator of the ubiquitin (Ubl) conjugation pathway by mediating the deneddylation of the cullin subunit of SCF-type E3 ubiquitin-protein ligase complexes. The CSN complex is involved in the regulation of the mating pheromone response. The polypeptide is COP9 signalosome complex subunit 9 (CSN9) (Saccharomyces cerevisiae (strain ATCC 204508 / S288c) (Baker's yeast)).